Reading from the N-terminus, the 397-residue chain is Purine ribonucleoside efflux pump NepI (397 aa).

Over 1-21 (MNENIAEKFRADGVARPNWSA) the chain is Cytoplasmic. A helical membrane pass occupies residues 22–42 (VFAVAFCVACLITVEFLPVSL). Topologically, residues 43 to 54 (LTPMAQDLGISE) are periplasmic. The chain crosses the membrane as a helical span at residues 55–75 (GIAGQSVTVTAFVAMFSSLFI). Topologically, residues 76–85 (TQIIQATDRR) are cytoplasmic. The chain crosses the membrane as a helical span at residues 86-106 (YIVILFAVLLTASCLMVSFAN). Residue serine 107 is a topological domain, periplasmic. The helical transmembrane segment at 108–128 (FTLLLLGRACLGLALGGFWAM) threads the bilayer. Residues 129–147 (SASLTMRLVPARTVPKALS) are Cytoplasmic-facing. Residues 148–168 (VIFGAVSIALVIAAPLGSFLG) form a helical membrane-spanning segment. Over 169–175 (GIIGWRN) the chain is Periplasmic. Residues 176-196 (VFNAAAVMGVLCVIWVVKSLP) traverse the membrane as a helical segment. Topologically, residues 197-215 (SLPGEPSHQKQNMFSLLQR) are cytoplasmic. Residues 216–236 (PGVMAGMIAIFMSFAGQFAFF) traverse the membrane as a helical segment. Topologically, residues 237 to 255 (TYIRPVYMNLAGFDVDGLT) are periplasmic. The helical transmembrane segment at 256 to 276 (LVLLSFGIASFVGTSFSSYVL) threads the bilayer. Residues 277-281 (KRSVK) are Cytoplasmic-facing. Residues 282 to 302 (LALAGAPLLLALSALTLIVWG) traverse the membrane as a helical segment. Topologically, residues 303 to 305 (SDK) are periplasmic. Residues 306–326 (TVAAVIAIIWGLAFALVPVGW) form a helical membrane-spanning segment. Over 327–343 (STWITRSLADQAEKAGS) the chain is Cytoplasmic. The helical transmembrane segment at 344–364 (IQVAVIQLANTCGAAVGGYAL) threads the bilayer. The Periplasmic portion of the chain corresponds to 365–366 (DN). A helical transmembrane segment spans residues 367 to 387 (FGLLSPLALSGCLMLLTALVV). Residues 388-397 (AAKVRITPMS) lie on the Cytoplasmic side of the membrane.

Belongs to the major facilitator superfamily. DHA1 family. NepI (TC 2.A.1.2.26) subfamily.

It is found in the cell inner membrane. It catalyses the reaction inosine(in) + H(+)(out) = inosine(out) + H(+)(in). The enzyme catalyses guanosine(in) + H(+)(out) = guanosine(out) + H(+)(in). In terms of biological role, involved in the efflux of purine ribonucleosides, such as inosine and guanosine. The chain is Purine ribonucleoside efflux pump NepI from Salmonella enteritidis PT4 (strain P125109).